Consider the following 286-residue polypeptide: Phosphonates import ATP-binding protein PhnC (286 aa).

In terms of domain architecture, ABC transporter spans 3-246; it reads FHLKQVTRRF…AVTEIYGTDS (244 aa). 35–42 contacts ATP; it reads GRSGAGKS.

It belongs to the ABC transporter superfamily. Phosphonates importer (TC 3.A.1.9.1) family. In terms of assembly, the complex is composed of two ATP-binding proteins (PhnC), two transmembrane proteins (PhnE) and a solute-binding protein (PhnD).

It localises to the cell inner membrane. It catalyses the reaction phosphonate(out) + ATP + H2O = phosphonate(in) + ADP + phosphate + H(+). Part of the ABC transporter complex PhnCDE involved in phosphonates import. Responsible for energy coupling to the transport system. The chain is Phosphonates import ATP-binding protein PhnC from Agrobacterium fabrum (strain C58 / ATCC 33970) (Agrobacterium tumefaciens (strain C58)).